The primary structure comprises 233 residues: Small ribosomal subunit protein uS3 (233 aa).

In terms of domain architecture, KH type-2 spans 39–107 (VRQFLTKELS…PAQINTYEIR (69 aa)).

It belongs to the universal ribosomal protein uS3 family. Part of the 30S ribosomal subunit. Forms a tight complex with proteins S10 and S14.

Functionally, binds the lower part of the 30S subunit head. Binds mRNA in the 70S ribosome, positioning it for translation. The protein is Small ribosomal subunit protein uS3 of Hamiltonella defensa subsp. Acyrthosiphon pisum (strain 5AT).